A 206-amino-acid polypeptide reads, in one-letter code: Heat shock protein beta-1 (206 aa).

R12 is subject to Omega-N-methylarginine. A Phosphoserine modification is found at S13. S15 is modified (phosphoserine; by MAPKAPK2 and MAPKAPK3). S27 is modified (phosphoserine). Residues 74-206 are interaction with TGFB1I1; it reads RPAFSRALNR…GPESEQSGAK (133 aa). The region spanning 80–188 is the sHSP domain; the sequence is ALNRQLSSGV…QSAEITIPVT (109 aa). S86 bears the Phosphoserine; by MAPKAPK2, MAPKAPK3 and MAPKAPK5 mark. S87, S90, and S102 each carry phosphoserine. K127 carries the N6-acetyllysine modification. Position 178 is a phosphothreonine (T178). Phosphoserine is present on residues S180 and S200.

This sequence belongs to the small heat shock protein (HSP20) family. Homooligomer. Homodimer; becomes monomeric upon activation. Heterooligomer; with HSPB6. Associates with alpha- and beta-tubulin. Interacts with TGFB1I1. Interacts with CRYAB. Interacts with HSPB8. Interacts with HSPBAP1. Phosphorylated upon exposure to protein kinase C activators and heat shock. Phosphorylation by MAPKAPK2 and MAPKAPK3 in response to stress dissociates HSPB1 from large small heat-shock protein (sHsps) oligomers and impairs its chaperone activity and ability to protect against oxidative stress effectively. Phosphorylation by MAPKAPK5 in response to PKA stimulation induces F-actin rearrangement. In terms of tissue distribution, expressed in a variety of tissues. High levels in lung, adrenal, xiphoid, adipose tissue, heart and striated and smooth muscle, lower levels in the CNS. Adult levels are much higher in the slow-twitch soleus muscle than in the fast-twitch rectus femoris and extensor digitorum muscles.

The protein resides in the cytoplasm. The protein localises to the nucleus. It is found in the cytoskeleton. Its subcellular location is the spindle. Functionally, small heat shock protein which functions as a molecular chaperone probably maintaining denatured proteins in a folding-competent state. Plays a role in stress resistance and actin organization. Through its molecular chaperone activity may regulate numerous biological processes including the phosphorylation and the axonal transport of neurofilament proteins. In Rattus norvegicus (Rat), this protein is Heat shock protein beta-1 (Hspb1).